We begin with the raw amino-acid sequence, 373 residues long: Caspase-4 (373 aa).

Positions 1–59 (MAENKHPDKPLKVLEQLGKEVLTEYLEKLVQSNVLKLKEEDKQKFNNAERSDKRWVFVD) are required for LPS-binding. Residues 1–80 (MAENKHPDKP…MLLQTFFSVD (80 aa)) constitute a propeptide that is removed on maturation. The 91-residue stretch at 1–91 (MAENKHPDKP…GSHHGEANLE (91 aa)) folds into the CARD domain. Phosphoserine is present on serine 83. Residues histidine 206 and cysteine 254 contribute to the active site. Residues 267 to 285 (SSKPQLCRGVDLPRNMEAD) constitute a propeptide that is removed on maturation. Arginine 310 carries the post-translational modification (Microbial infection) ADP-riboxanated arginine.

The protein belongs to the peptidase C14A family. In terms of assembly, heterotetramer that consists of two anti-parallel arranged heterodimers, each one formed by a 20 kDa (Caspase-4 subunit p20) and a 10 kDa (Caspase-4 subunit p10) subunit. Upon direct LPS-binding, forms large homooligomers, resulting in its activation. These oligomers are often referred to as 'non-canonical inflammasomes'. In its precursor form, interacts with TMEM214; this interaction is required for association with the endoplasmic reticulum membrane. Interacts with CASP1. Interacts with NOD2. Interacts with Serpinb1a, Serpinb1b and Serpinb1c; these interactions regulate CASP4 activity. As to quaternary structure, heterotetramer that consists of two anti-parallel arranged heterodimers, each one formed by a 20 kDa (Caspase-4 subunit p20) and a 10 kDa (Caspase-4 subunit p10) subunit. In terms of processing, in response to activation signals, undergoes autoproteolytic cleavage and activation. Post-translationally, (Microbial infection) ADP-riboxanation by S.flexneri OspC3 blocks CASP4 autoprocessing, preventing CASP4 activation and ability to recognize and cleave GSDMD, thereby thwarting the inflammasome/pyroptosis-mediated defense. Widely expressed, including in thymus, lung and spleen (at protein level). Very low levels, if any, in the brain.

It is found in the cytoplasm. It localises to the cytosol. Its subcellular location is the endoplasmic reticulum membrane. The protein localises to the mitochondrion. The protein resides in the inflammasome. It is found in the secreted. The catalysed reaction is Strict requirement for Asp at the P1 position and has a preferred cleavage sequence of (Ile/Leu/Val/Phe)-Gly-His-Asp-|-.. Activated by homooligomerization induced by direct binding to cytosolic LPS, in a TLR4-independent manner. In addition to LPS, CASP4/CASP11 may also be activated by oxidized phospholipid 1-palmitoyl-2-arachidonoyl- sn-glycero-3-phosphorylcholine, an oxidized phospholipid (oxPAPC), in dendritic cells, promoting adaptive immunity. The role of oxPAPC is however unclear and another report suggests that oxPAPC competes with LPS-binding and inhibits the non-canonical inflammasome in macrophages. In terms of biological role, inflammatory caspase that acts as the effector of the non-canonical inflammasome by mediating lipopolysaccharide (LPS)-induced pyroptosis. Also indirectly activates the NLRP3 and NLRP6 inflammasomes. Acts as a thiol protease that cleaves a tetrapeptide after an Asp residue at position P1: catalyzes cleavage of CGAS and GSDMD. In contrast to its human ortholog, does not cleave IL18. Effector of the non-canonical inflammasome independently of NLRP3 inflammasome and CASP1: the non-canonical inflammasome promotes pyroptosis through GSDMD cleavage without involving secretion of cytokine IL1B and IL18. In the non-canonical inflammasome, CASP4/CASP11 is activated by direct binding to the lipid A moiety of LPS without the need of an upstream sensor. LPS-binding promotes CASP4/CASP11 activation and CASP4/CASP11-mediated cleavage of GSDMD, followed by pyroptosis of infected cells and their extrusion into the gut lumen. Also indirectly promotes secretion of mature cytokines (IL1A, IL18 and HMGB1) downstream of GSDMD-mediated pyroptosis via activation of the NLRP3 and NLRP6 inflammasomes. Involved in NLRP3-dependent CASP1 activation and IL1B and IL18 secretion in response to non-canonical activators, such as UVB radiation or cholera enterotoxin. Involved in NLRP6 inflammasome-dependent activation in response to lipoteichoic acid (LTA), a cell-wall component of Gram-positive bacteria, which leads to CASP1 activation and IL1B and IL18 secretion. Involved in LPS-induced IL6 secretion; this activity may not require caspase enzymatic activity. The non-canonical inflammasome is required for innate immunity to cytosolic, but not vacuolar, bacteria. Plays a crucial role in the restriction of S.typhimurium replication in colonic epithelial cells during infection. Activation of the non-canonical inflammasome in brain endothelial cells can lead to excessive pyroptosis, leading to blood-brain barrier breakdown. Pyroptosis limits bacterial replication, while cytokine secretion promotes the recruitment and activation of immune cells and triggers mucosal inflammation. May also act as an activator of adaptive immunity in dendritic cells, following activation by oxidized phospholipid 1-palmitoyl-2-arachidonoyl- sn-glycero-3-phosphorylcholine, an oxidized phospholipid (oxPAPC). Cleavage of GSDMD is not strictly dependent on the consensus cleavage site but depends on an exosite interface on CASP4/CASP11 that recognizes and binds the Gasdermin-D, C-terminal (GSDMD-CT) part. In contrast, it does not directly process IL1B. During non-canonical inflammasome activation, cuts CGAS and may play a role in the regulation of antiviral innate immune activation. The polypeptide is Caspase-4 (Mus musculus (Mouse)).